The sequence spans 174 residues: UPF0316 protein LMHCC_0787 (174 aa).

3 helical membrane-spanning segments follow: residues 4-24, 36-56, and 62-82; these read GIFIVATIFVVNILYVTIYTV, LAALSSVFEMIIYVVALSLVL, and IANVLAYAIGFGVGIIVGMKI.

This sequence belongs to the UPF0316 family.

Its subcellular location is the cell membrane. This chain is UPF0316 protein LMHCC_0787, found in Listeria monocytogenes serotype 4a (strain HCC23).